We begin with the raw amino-acid sequence, 489 residues long: Glutamyl-tRNA(Gln) amidotransferase subunit A (489 aa).

Residues Lys-80 and Ser-160 each act as charge relay system in the active site. Ser-184 functions as the Acyl-ester intermediate in the catalytic mechanism.

This sequence belongs to the amidase family. GatA subfamily. As to quaternary structure, heterotrimer of A, B and C subunits.

The enzyme catalyses L-glutamyl-tRNA(Gln) + L-glutamine + ATP + H2O = L-glutaminyl-tRNA(Gln) + L-glutamate + ADP + phosphate + H(+). Functionally, allows the formation of correctly charged Gln-tRNA(Gln) through the transamidation of misacylated Glu-tRNA(Gln) in organisms which lack glutaminyl-tRNA synthetase. The reaction takes place in the presence of glutamine and ATP through an activated gamma-phospho-Glu-tRNA(Gln). The protein is Glutamyl-tRNA(Gln) amidotransferase subunit A of Wolbachia pipientis wMel.